We begin with the raw amino-acid sequence, 609 residues long: Arginine--tRNA ligase (609 aa).

Residues 132–142 (ANPTSSLHVGH) carry the 'HIGH' region motif.

This sequence belongs to the class-I aminoacyl-tRNA synthetase family. Monomer.

It is found in the cytoplasm. The catalysed reaction is tRNA(Arg) + L-arginine + ATP = L-arginyl-tRNA(Arg) + AMP + diphosphate. The polypeptide is Arginine--tRNA ligase (Psychrobacter cryohalolentis (strain ATCC BAA-1226 / DSM 17306 / VKM B-2378 / K5)).